Reading from the N-terminus, the 986-residue chain is Ephrin type-A receptor 4-A (986 aa).

The N-terminal stretch at 1 to 20 (MAGIVHGILFCGLFGLCWAV) is a signal peptide. The Extracellular portion of the chain corresponds to 21-547 (TGSRIYPASE…MIGEGASPTV (527 aa)). The region spanning 30–209 (EVTLLDSRSV…FYKKCPLTVR (180 aa)) is the Eph LBD domain. Fibronectin type-III domains are found at residues 328-438 (PPSA…TNQA) and 439-536 (APST…TVPS). Residues Asn-340 and Asn-407 are each glycosylated (N-linked (GlcNAc...) asparagine). Residues 548–569 (LLVSVAGSIVLVVILIAAFVIS) form a helical membrane-spanning segment. The Cytoplasmic portion of the chain corresponds to 570–986 (RRRSKYSKAK…QQIQGRMVPV (417 aa)). Residues Tyr-595 and Tyr-601 each carry the phosphotyrosine; by autocatalysis modification. Residues 620–881 (IKIEKVIGVG…QIVSMLDKLI (262 aa)) enclose the Protein kinase domain. ATP-binding positions include 626-634 (IGVGEFGEV) and Lys-652. Asp-745 functions as the Proton acceptor in the catalytic mechanism. 2 positions are modified to phosphotyrosine; by autocatalysis: Tyr-778 and Tyr-928. Positions 911-975 (SQVASVLDWL…LSSVQGMRTQ (65 aa)) constitute an SAM domain. Residues 984–986 (VPV) carry the PDZ-binding motif.

It belongs to the protein kinase superfamily. Tyr protein kinase family. Ephrin receptor subfamily.

The protein localises to the cell membrane. It localises to the early endosome. It catalyses the reaction L-tyrosyl-[protein] + ATP = O-phospho-L-tyrosyl-[protein] + ADP + H(+). Receptor tyrosine kinase which binds membrane-bound ephrin family ligands residing on adjacent cells, leading to contact-dependent bidirectional signaling into neighboring cells. The signaling pathway downstream of the receptor is referred to as forward signaling while the signaling pathway downstream of the ephrin ligand is referred to as reverse signaling. Highly promiscuous, it has the unique property among Eph receptors to bind and to be physiologically activated by both GPI-anchored ephrin-A and transmembrane ephrin-B ligands including EFNA1 and EFNB3. Upon activation by ephrin ligands, modulates cell morphology and integrin-dependent cell adhesion through regulation of the Rac, Rap and Rho GTPases activity. Plays an important role in the development of the nervous system controlling different steps of axonal guidance including the establishment of the corticospinal projections. This chain is Ephrin type-A receptor 4-A (epha4-a), found in Xenopus laevis (African clawed frog).